The sequence spans 115 residues: MSKIIQQLEQEQLRTDIPAFAQGDTVRVQVRVKEGGKERLQAFEGIVIAKRNRGLHSAFTVRKISNGEGVERVFQTHSPLIHSVELKRRGDVRRAKLYYLRNLSGKAARIKEKLN.

Belongs to the bacterial ribosomal protein bL19 family.

Its function is as follows. This protein is located at the 30S-50S ribosomal subunit interface and may play a role in the structure and function of the aminoacyl-tRNA binding site. This is Large ribosomal subunit protein bL19 from Aeromonas hydrophila subsp. hydrophila (strain ATCC 7966 / DSM 30187 / BCRC 13018 / CCUG 14551 / JCM 1027 / KCTC 2358 / NCIMB 9240 / NCTC 8049).